The chain runs to 439 residues: Mitochondrial distribution and morphology protein 12 (439 aa).

One can recognise an SMP-LTD domain in the interval 1-439 (MSIDVNWRSA…VYPSFWTFLI (439 aa)). Positions 70-85 (YEEDDDDHTSDASEEL) are enriched in acidic residues. 3 disordered regions span residues 70–102 (YEED…ELNE), 184–274 (SGWS…PPRM), and 353–386 (GSEQ…RHGG). Residues 197 to 212 (GRSERHAGMKHQRAEP) show a composition bias toward basic and acidic residues. Positions 215 to 230 (DTSNSTSRPSTANTLP) are enriched in polar residues. A compositionally biased stretch (low complexity) spans 231–240 (SHPSSSSKNS). Over residues 247-261 (RNDHPSLHAGEHIED) the composition is skewed to basic and acidic residues.

This sequence belongs to the MDM12 family. As to quaternary structure, component of the ER-mitochondria encounter structure (ERMES) or MDM complex, composed of mmm1, mdm10, mdm12 and mdm34. A mmm1 homodimer associates with one molecule of mdm12 on each side in a pairwise head-to-tail manner, and the SMP-LTD domains of mmm1 and mdm12 generate a continuous hydrophobic tunnel for phospholipid trafficking.

The protein localises to the mitochondrion outer membrane. The protein resides in the endoplasmic reticulum membrane. Functionally, component of the ERMES/MDM complex, which serves as a molecular tether to connect the endoplasmic reticulum (ER) and mitochondria. Components of this complex are involved in the control of mitochondrial shape and protein biogenesis, and function in nonvesicular lipid trafficking between the ER and mitochondria. Mdm12 is required for the interaction of the ER-resident membrane protein mmm1 and the outer mitochondrial membrane-resident beta-barrel protein mdm10. The mdm12-mmm1 subcomplex functions in the major beta-barrel assembly pathway that is responsible for biogenesis of all mitochondrial outer membrane beta-barrel proteins, and acts in a late step after the SAM complex. The mdm10-mdm12-mmm1 subcomplex further acts in the TOM40-specific pathway after the action of the mdm12-mmm1 complex. Essential for establishing and maintaining the structure of mitochondria and maintenance of mtDNA nucleoids. This chain is Mitochondrial distribution and morphology protein 12, found in Neosartorya fischeri (strain ATCC 1020 / DSM 3700 / CBS 544.65 / FGSC A1164 / JCM 1740 / NRRL 181 / WB 181) (Aspergillus fischerianus).